We begin with the raw amino-acid sequence, 1111 residues long: RecBCD enzyme subunit RecC (1111 aa).

The protein belongs to the RecC family. In terms of assembly, heterotrimer of RecB, RecC and RecD. All subunits contribute to DNA-binding.

Its function is as follows. A helicase/nuclease that prepares dsDNA breaks (DSB) for recombinational DNA repair. Binds to DSBs and unwinds DNA via a highly rapid and processive ATP-dependent bidirectional helicase activity. Unwinds dsDNA until it encounters a Chi (crossover hotspot instigator) sequence from the 3' direction. Cuts ssDNA a few nucleotides 3' to the Chi site. The properties and activities of the enzyme are changed at Chi. The Chi-altered holoenzyme produces a long 3'-ssDNA overhang and facilitates RecA-binding to the ssDNA for homologous DNA recombination and repair. Holoenzyme degrades any linearized DNA that is unable to undergo homologous recombination. In the holoenzyme this subunit recognizes the wild-type Chi sequence, and when added to isolated RecB increases its ATP-dependent helicase processivity. In Buchnera aphidicola subsp. Baizongia pistaciae (strain Bp), this protein is RecBCD enzyme subunit RecC.